The primary structure comprises 308 residues: RNA pseudouridylate synthase domain-containing protein 1 (308 aa).

Met-1 is modified (N-acetylmethionine). The active site involves Asp-67. Residues 257 to 292 (APDPDPSEGGPGPCSPCTPLPGPGRPPPPPETEVQR) are disordered. A compositionally biased stretch (pro residues) spans 269-287 (PCSPCTPLPGPGRPPPPPE).

It belongs to the pseudouridine synthase RluA family.

The polypeptide is RNA pseudouridylate synthase domain-containing protein 1 (RPUSD1) (Bos taurus (Bovine)).